Reading from the N-terminus, the 583-residue chain is Radixin (583 aa).

One can recognise an FERM domain in the interval 5 to 295; that stretch reads INVRVTTMDA…GNHELYMRRR (291 aa). A 1,2-diacyl-sn-glycero-3-phospho-(1D-myo-inositol) contacts are provided by residues 60-63 and lysine 278; that span reads KLNK. Disordered regions lie at residues 310-336 and 436-527; these read REEKHQKQLERAQLENEKKKREIAEKE and KKKE…VKKQ. Composition is skewed to basic and acidic residues over residues 436-447 and 455-464; these read KKKEEEASEWQH and DLEKTKEELK. The segment covering 469–480 has biased composition (pro residues); the sequence is APPPPPPPPVIP. Basic and acidic residues-rich tracts occupy residues 483–492 and 506–525; these read ENEHDEHDEN and MNHRSEEERVTETQKNERVK.

It is found in the cell membrane. It localises to the cytoplasm. The protein resides in the cytoskeleton. Functionally, probably plays a crucial role in the binding of the barbed end of actin filaments to the plasma membrane. This chain is Radixin (RDX), found in Gallus gallus (Chicken).